A 501-amino-acid chain; its full sequence is Cytochrome P450 2J4 (501 aa).

Transmembrane regions (helical) follow at residues 12 to 32 (IWAA…LLLA) and 77 to 97 (NIFS…LPLI). Cysteine 447 provides a ligand contact to heme.

Belongs to the cytochrome P450 family. Heme is required as a cofactor. In terms of tissue distribution, expressed in small intestinal enterocytes (at protein level). In the intestinal crypt, expressed at higher levels in the mature villous cells than in undifferentiated crypt cells (at protein level). Expressed in liver, kidney, lung, and olfactory mucosa (at protein level).

It localises to the endoplasmic reticulum membrane. It is found in the microsome membrane. The catalysed reaction is an organic molecule + reduced [NADPH--hemoprotein reductase] + O2 = an alcohol + oxidized [NADPH--hemoprotein reductase] + H2O + H(+). The enzyme catalyses (5Z,8Z,11Z,14Z)-eicosatetraenoate + reduced [NADPH--hemoprotein reductase] + O2 = 19-hydroxy-(5Z,8Z,11Z,14Z)-eicosatetraenoate + oxidized [NADPH--hemoprotein reductase] + H2O + H(+). It catalyses the reaction all-trans-retinal + reduced [NADPH--hemoprotein reductase] + O2 = all-trans-retinoate + oxidized [NADPH--hemoprotein reductase] + H2O + 2 H(+). It carries out the reaction 9-cis-retinal + reduced [NADPH--hemoprotein reductase] + O2 = 9-cis-retinoate + oxidized [NADPH--hemoprotein reductase] + H2O + 2 H(+). The protein operates within lipid metabolism; arachidonate metabolism. It participates in cofactor metabolism; retinol metabolism. Its function is as follows. A cytochrome P450 monooxygenase that may play a major role in intestinal retinoid metabolism. Catalyzes the oxidative transformation of all-trans retinal and 9-cis-retinal to the corresponding active forms all-trans and 9-cis retinoic acids. Catalyzes the hydroxylation of carbon-hydrogen bonds. Hydroxylates arachidonic acid predominantly at the omega-1 position. Mechanistically, uses molecular oxygen inserting one oxygen atom into a substrate, and reducing the second into a water molecule, with two electrons provided by NADPH via cytochrome P450 reductase (CPR; NADPH--hemoprotein reductase). This Rattus norvegicus (Rat) protein is Cytochrome P450 2J4.